Reading from the N-terminus, the 418-residue chain is AA11 family lytic polysaccharide monooxygenase B (418 aa).

The signal sequence occupies residues 1-21 (MMFSKSGLVAVAMLGASAVEA). Cu(+) is bound by residues His-22 and His-82. Cystine bridges form between Cys-50-Cys-165, Cys-87-Cys-113, and Cys-206-Cys-240. N-linked (GlcNAc...) asparagine glycosylation is found at Asn-120 and Asn-134. The segment at 226 to 345 (DGNPSNLQPA…SSSSSNGALT (120 aa)) is disordered. A compositionally biased stretch (low complexity) spans 254–345 (SPSTPSTSSS…SSSSSNGALT (92 aa)).

Belongs to the polysaccharide monooxygenase AA11 family. Cu(2+) is required as a cofactor.

The protein resides in the secreted. Functionally, lytic polysaccharide monooxygenase (LPMO)-like protein that acts as a strict peroxygenase and does not catalyze a monooxygenase reaction. It is indeed hardly active on chitin, while being very active on soluble oligomers of N-acetylglucosamine. Cleaves the glycosidic bonds byoxidizing the C1 position. Also unable to oxidize cellopentaose. Probably breaks glycosidic bonds in non-polymeric substrates possibly carbohydrates in the cell wall of the fungus or its competitors. In the presence of chitotetraose, the enzyme can withstand considerable amounts of H(2)O(2), which it uses to efficiently and stoichiometrically convert this substrate. This is AA11 family lytic polysaccharide monooxygenase B from Aspergillus fumigatus (strain ATCC MYA-4609 / CBS 101355 / FGSC A1100 / Af293) (Neosartorya fumigata).